We begin with the raw amino-acid sequence, 848 residues long: DIS3-like exonuclease 2 (848 aa).

The disordered stretch occupies residues 153–173 (KGDRNSGKTDNNSPNKTEKRC). Residues Asp-345 and Asp-354 each contribute to the Mg(2+) site.

Belongs to the RNR ribonuclease family. DIS3L2 subfamily. The cofactor is Mg(2+). Mn(2+) serves as cofactor. Post-translationally, cleaved by caspase ced-3 in vitro.

The protein localises to the cytoplasm. It localises to the P-body. Functionally, 3'-5'-exoribonuclease that specifically recognizes RNAs polyuridylated at their 3' end and mediates their degradation. Component of an exosome-independent RNA degradation pathway that mediates degradation of cytoplasmic mRNAs that have been deadenylated and subsequently uridylated at their 3'. The protein is DIS3-like exonuclease 2 of Caenorhabditis elegans.